The primary structure comprises 156 residues: Ribonuclease pancreatic (156 aa).

An N-terminal signal peptide occupies residues 1-28; the sequence is MALEKSLALLPLLVLVLLVLGWVQPSLG. Over residues 33–43 the composition is skewed to basic and acidic residues; that stretch reads AQKFQRQHMDS. Residues 33–52 form a disordered region; the sequence is AQKFQRQHMDSDGSPSSNPT. 2 residues coordinate substrate: K35 and R38. Residue H40 is the Proton acceptor of the active site. Intrachain disulfides connect C54/C112, C68/C123, C86/C138, and C93/C100. The N-linked (GlcNAc...) asparagine glycan is linked to N62. Substrate contacts are provided by residues 69–73, K94, and R113; that span reads KPVNT. N-linked (GlcNAc...) asparagine glycosylation is present at N116. Residue H147 is the Proton donor of the active site.

The protein belongs to the pancreatic ribonuclease family. As to quaternary structure, monomer. Interacts with and forms tight 1:1 complexes with RNH1. Dimerization of two such complexes may occur. Interaction with RNH1 inhibits this protein.

It is found in the secreted. It catalyses the reaction an [RNA] containing cytidine + H2O = an [RNA]-3'-cytidine-3'-phosphate + a 5'-hydroxy-ribonucleotide-3'-[RNA].. The enzyme catalyses an [RNA] containing uridine + H2O = an [RNA]-3'-uridine-3'-phosphate + a 5'-hydroxy-ribonucleotide-3'-[RNA].. Endonuclease that catalyzes the cleavage of RNA on the 3' side of pyrimidine nucleotides. Acts on single-stranded and double-stranded RNA. The polypeptide is Ribonuclease pancreatic (RNASE1) (Saguinus oedipus (Cotton-top tamarin)).